A 378-amino-acid chain; its full sequence is Heat-inducible transcription repressor HrcA (378 aa).

The protein belongs to the HrcA family.

In terms of biological role, negative regulator of class I heat shock genes (grpE-dnaK-dnaJ and groELS operons). Prevents heat-shock induction of these operons. This Synechocystis sp. (strain ATCC 27184 / PCC 6803 / Kazusa) protein is Heat-inducible transcription repressor HrcA.